The primary structure comprises 108 residues: Insertion element IS6110 uncharacterized 12.0 kDa protein (108 aa).

The protein belongs to the transposase 8 family.

The sequence is that of Insertion element IS6110 uncharacterized 12.0 kDa protein from Mycobacterium bovis (strain ATCC BAA-935 / AF2122/97).